Here is a 540-residue protein sequence, read N- to C-terminus: Threonine--tRNA ligase catalytic subunit (540 aa).

Residues aspartate 134–proline 428 form a catalytic region. Zn(2+) contacts are provided by cysteine 226, histidine 277, and histidine 405.

It belongs to the class-II aminoacyl-tRNA synthetase family. Homodimer. Probably interacts with its editing subunit. Zn(2+) serves as cofactor.

Its subcellular location is the cytoplasm. The catalysed reaction is tRNA(Thr) + L-threonine + ATP = L-threonyl-tRNA(Thr) + AMP + diphosphate + H(+). In terms of biological role, catalyzes the attachment of threonine to tRNA(Thr) in a two-step reaction: L-threonine is first activated by ATP to form Thr-AMP and then transferred to the acceptor end of tRNA(Thr). Also activates L-serine and transfers it to tRNA(Thr) but cannot deacylate incorrectly charged amino acid; unlike most archaea the editing function is found in a freestanding protein. This Sulfurisphaera tokodaii (strain DSM 16993 / JCM 10545 / NBRC 100140 / 7) (Sulfolobus tokodaii) protein is Threonine--tRNA ligase catalytic subunit.